A 1350-amino-acid chain; its full sequence is Protein transport protein SEC16A homolog (1350 aa).

Disordered regions lie at residues 26 to 45, 73 to 97, 964 to 1063, 1118 to 1216, and 1235 to 1350; these read YTPT…GSDS, LGND…SIAP, MPPP…TRKV, AEEA…KPPI, and QVME…EVEL. Over residues 35–45 the composition is skewed to basic and acidic residues; it reads KELKFDDGSDS. Ser43 bears the Phosphoserine mark. Residues 970–1002 are compositionally biased toward polar residues; the sequence is HSTTGNPQVNEYQHQQQEAAKLSYSQSANTMSS. Low complexity predominate over residues 1150-1168; the sequence is SPSSGSWSSGSPTPSENSP. Composition is skewed to polar residues over residues 1195–1210 and 1289–1316; these read TYNQ…PPVQ and RSGS…GSVN. The span at 1317-1343 shows a compositional bias: low complexity; the sequence is SSSFMSPTSASTFRPSPLNSSSSSLGE.

The protein belongs to the SEC16 family. As to quaternary structure, interacts with SEC13A, SEC13B and SEC31A.

The protein resides in the golgi apparatus. The protein localises to the golgi stack. Its subcellular location is the endoplasmic reticulum. Functionally, required for efficient protein export from the endoplasmic reticulum (ER) to the Golgi by regulating COPII coat dynamics at the ER. Functions as a scaffold and regulator of COPII coat assembly at ER exit sites. This chain is Protein transport protein SEC16A homolog, found in Arabidopsis thaliana (Mouse-ear cress).